The primary structure comprises 111 residues: uncharacterized protein (111 aa).

It is found in the mitochondrion. This is an uncharacterized protein from Arabidopsis thaliana (Mouse-ear cress).